A 331-amino-acid polypeptide reads, in one-letter code: dTDP-glucose 4,6-dehydratase (331 aa).

Residues 11–12 (FI), 33–36 (DALT), 57–58 (DI), 77–81 (FAAET), and S96 contribute to the NAD(+) site. T81 contacts substrate. T120 contributes to the substrate binding site. The active-site Proton donor is D121. Residues E122 and Y147 each act as proton acceptor in the active site. Residue 147–151 (YSSTK) participates in NAD(+) binding. Residue N176 participates in substrate binding. Position 177 (N177) interacts with NAD(+). Substrate is bound by residues 186 to 191 (KFIPRQ), 202 to 204 (KLY), R211, N246, and 269 to 273 (DRAGH).

The protein belongs to the NAD(P)-dependent epimerase/dehydratase family. dTDP-glucose dehydratase subfamily. Homodimer. NAD(+) serves as cofactor.

It carries out the reaction dTDP-alpha-D-glucose = dTDP-4-dehydro-6-deoxy-alpha-D-glucose + H2O. The protein operates within carbohydrate biosynthesis; dTDP-L-rhamnose biosynthesis. Functionally, catalyzes the dehydration of dTDP-D-glucose to form dTDP-6-deoxy-D-xylo-4-hexulose via a three-step process involving oxidation, dehydration and reduction. Involved in the biosynthesis of the dTDP-L-rhamnose which is a component of the critical linker, D-N-acetylglucosamine-L-rhamnose disaccharide, which connects the galactan region of arabinogalactan to peptidoglycan via a phosphodiester linkage. This chain is dTDP-glucose 4,6-dehydratase (rmlB), found in Mycolicibacterium smegmatis (strain ATCC 700084 / mc(2)155) (Mycobacterium smegmatis).